The sequence spans 387 residues: Probable multidrug resistance protein EmrK (387 aa).

The Cytoplasmic segment spans residues 1-16 (MEQINSNKKHSNRRKY). A helical transmembrane segment spans residues 17–37 (FSLLAVVLFIAFSGAYAYWSM). Topologically, residues 38–387 (ELEDMISTDD…SNIISHNGQL (350 aa)) are periplasmic.

The protein belongs to the membrane fusion protein (MFP) (TC 8.A.1) family. In terms of assembly, part of the tripartite efflux system EmrYK-TolC, which is composed of an inner membrane transporter, EmrY, a membrane fusion protein, EmrK, and an outer membrane component, TolC. The complex forms a large protein conduit and can translocate molecules across both the inner and outer membranes.

The protein localises to the cell inner membrane. In terms of biological role, part of the tripartite efflux system EmrYK-TolC, which confers resistance to various drugs. The protein is Probable multidrug resistance protein EmrK (emrK) of Escherichia coli (strain K12).